The chain runs to 1334 residues: Lysine-specific demethylase 3A-B (1334 aa).

3 disordered regions span residues 243 to 288 (DQND…KTSF), 352 to 382 (PGIQ…SQNL), and 514 to 533 (KPQE…VTYP). The segment covering 267 to 283 (TEVKQTRNEEVPSKDVT) has biased composition (basic and acidic residues). A C6-type zinc finger spans residues 684–709 (CDACDTTIFNLHWVCPKCGFGVCVDC). The LXXLL motif motif lies at 897–901 (LRNLL). The region spanning 1089–1294 (RREGKLNLAA…HCFCLTQEFR (206 aa)) is the JmjC domain. 3 residues coordinate Fe cation: His-1133, Asp-1135, and His-1262.

It belongs to the JHDM2 histone demethylase family. Requires Fe(2+) as cofactor.

It is found in the cytoplasm. The protein resides in the nucleus. It catalyses the reaction N(6),N(6)-dimethyl-L-lysyl(9)-[histone H3] + 2 2-oxoglutarate + 2 O2 = L-lysyl(9)-[histone H3] + 2 formaldehyde + 2 succinate + 2 CO2. Functionally, histone demethylase that specifically demethylates 'Lys-9' of histone H3, thereby playing a central role in histone code. Preferentially demethylates mono- and dimethylated H3 'Lys-9' residue, with a preference for dimethylated residue, while it has weak or no activity on trimethylated H3 'Lys-9'. Demethylation of Lys residue generates formaldehyde and succinate. The polypeptide is Lysine-specific demethylase 3A-B (kdm3a-b) (Xenopus laevis (African clawed frog)).